A 358-amino-acid polypeptide reads, in one-letter code: Photosystem II protein D1 (358 aa).

3 consecutive transmembrane segments (helical) span residues Tyr-29–Ile-46, His-116–Leu-131, and Trp-140–Ser-154. Residue His-116 coordinates chlorophyll a. Trp-124 lines the pheophytin a pocket. [CaMn4O5] cluster-binding residues include Asp-168 and Glu-187. Residues Phe-195–Leu-216 traverse the membrane as a helical segment. His-196 contributes to the chlorophyll a binding site. A quinone contacts are provided by residues His-213 and Ser-262–Phe-263. His-213 is a binding site for Fe cation. His-270 is a Fe cation binding site. A helical transmembrane segment spans residues Phe-272–Leu-286. Residues His-330, Glu-331, Asp-340, and Ala-342 each coordinate [CaMn4O5] cluster. The propeptide occupies Ala-343–Gly-358.

Belongs to the reaction center PufL/M/PsbA/D family. In terms of assembly, PSII is composed of 1 copy each of membrane proteins PsbA, PsbB, PsbC, PsbD, PsbE, PsbF, PsbH, PsbI, PsbJ, PsbK, PsbL, PsbM, PsbT, PsbX, PsbY, PsbZ, Psb30/Ycf12, peripheral proteins PsbO, CyanoQ (PsbQ), PsbU, PsbV and a large number of cofactors. It forms dimeric complexes. The cofactor is The D1/D2 heterodimer binds P680, chlorophylls that are the primary electron donor of PSII, and subsequent electron acceptors. It shares a non-heme iron and each subunit binds pheophytin, quinone, additional chlorophylls, carotenoids and lipids. D1 provides most of the ligands for the Mn4-Ca-O5 cluster of the oxygen-evolving complex (OEC). There is also a Cl(-1) ion associated with D1 and D2, which is required for oxygen evolution. The PSII complex binds additional chlorophylls, carotenoids and specific lipids.. In terms of processing, tyr-159 forms a radical intermediate that is referred to as redox-active TyrZ, YZ or Y-Z. Post-translationally, C-terminally processed by CtpA; processing is essential to allow assembly of the oxygen-evolving complex and thus photosynthetic growth.

The protein localises to the cellular thylakoid membrane. It carries out the reaction 2 a plastoquinone + 4 hnu + 2 H2O = 2 a plastoquinol + O2. In terms of biological role, photosystem II (PSII) is a light-driven water:plastoquinone oxidoreductase that uses light energy to abstract electrons from H(2)O, generating O(2) and a proton gradient subsequently used for ATP formation. It consists of a core antenna complex that captures photons, and an electron transfer chain that converts photonic excitation into a charge separation. The D1/D2 (PsbA/PsbD) reaction center heterodimer binds P680, the primary electron donor of PSII as well as several subsequent electron acceptors. The polypeptide is Photosystem II protein D1 (Mastigocladus laminosus (Fischerella sp.)).